A 1204-amino-acid chain; its full sequence is Probable cation-transporting ATPase 13A4 (1204 aa).

The Cytoplasmic segment spans residues 1–32; that stretch reads MGENPAKSHYAQLNLGEENEMEIFGYKTQCCR. Residues 33-53 traverse the membrane as a helical segment; the sequence is KALCIAGYILSCGALLLLFYW. Over 54–219 the chain is Extracellular; that stretch reads KPEWDVWANC…FSVCLWFAED (166 aa). The helical transmembrane segment at 220–242 threads the bilayer; sequence YMEYAAAIIIMSPLSISLTVYDL. Residues 243 to 397 lie on the Cytoplasmic side of the membrane; sequence RQQSVKLQRL…NFRLYRDALR (155 aa). The helical transmembrane segment at 398–418 threads the bilayer; the sequence is FLMCLIAFAAIGMIYTVCVFA. Residues 419-433 lie on the Extracellular side of the membrane; that stretch reads LNGEEAGEVVKKALD. The chain crosses the membrane as a helical span at residues 434–454; sequence VITIAVPPALPAALTTGIIYT. The Cytoplasmic segment spans residues 455-897; it reads QRRLKKKGIF…REGRAALVTS (443 aa). The 4-aspartylphosphate intermediate role is filled by Asp-483. Positions 845 and 849 each coordinate Mg(2+). A helical transmembrane segment spans residues 898–918; the sequence is FCMFKYMALYSTIQYLGVLLL. Over 919-929 the chain is Extracellular; the sequence is YWQLNSFGNYQ. A helical membrane pass occupies residues 930 to 950; sequence FLFQDLAITTVIGMTMSFTEA. The Cytoplasmic portion of the chain corresponds to 951–967; sequence YPKLVPYRPPSQLVSPP. Residues 968–988 traverse the membrane as a helical segment; it reads LLLSVILNILFSLGMQILGFL. Residues 989–1043 lie on the Extracellular side of the membrane; the sequence is MVQKQPWYSKTDIHSACLSVNNHVENSSSASSLGLHGVGGGDPTEVDNGYKSYEN. A helical transmembrane segment spans residues 1044–1064; the sequence is TTVWLLSTINCLIIALVFSKG. Topologically, residues 1065-1075 are cytoplasmic; the sequence is KPFRQPIYTNY. The helical transmembrane segment at 1076–1096 threads the bilayer; that stretch reads VFIMVLVGQLGVCLFLVFADI. Topologically, residues 1097-1113 are extracellular; the sequence is DDLYSKMDLVCTPTTWR. A helical membrane pass occupies residues 1114-1134; it reads ISMVMMLAVTLAVSFLVEEAI. Residues 1135 to 1204 lie on the Cytoplasmic side of the membrane; it reads IENRALWLWL…PTFDSNEDAL (70 aa).

It belongs to the cation transport ATPase (P-type) (TC 3.A.3) family. Type V subfamily.

It localises to the membrane. The catalysed reaction is ATP + H2O = ADP + phosphate + H(+). This is Probable cation-transporting ATPase 13A4 (ATP13A4) from Gallus gallus (Chicken).